The following is a 768-amino-acid chain: Cullin-3 (768 aa).

S2 is modified (N-acetylserine). The interaction with KLHL18 stretch occupies residues 2 to 41 (SNLSKGTGSRKDTKMRIRAFPMTMDEKYVNSIWDLLKNAI). The residue at position 585 (S585) is a Phosphoserine. Positions 677–698 (VAAKQGESDPERKETRQKVDDD) are disordered. Over residues 682 to 698 (GESDPERKETRQKVDDD) the composition is skewed to basic and acidic residues. In terms of domain architecture, Cullin neddylation spans 698–760 (DRKHEIEAAI…REYLARTPED (63 aa)). K712 participates in a covalent cross-link: Glycyl lysine isopeptide (Lys-Gly) (interchain with G-Cter in NEDD8).

This sequence belongs to the cullin family. Forms neddylation-dependent homodimers. Component of multiple BCR (BTB-CUL3-RBX1) E3 ubiquitin-protein ligase complexes formed of CUL3, RBX1 and a variable BTB domain-containing protein acting as both, adapter to cullin and substrate recognition subunit. The BCR complex may be active as a heterodimeric complex, in which NEDD8, covalently attached to one CUL3 molecule, binds to the C-terminus of a second CUL3 molecule. Interacts with RBX1, RNF7 and TIP120A/CAND1. Part of the BCR(SPOP) containing SPOP, and of BCR containing homodimeric SPOPL or the heterodimer formed by SPOP and SPOPL. Part of the probable BCR(KLHL9-KLHL13) complex with BTB domain proteins KLHL9 and KLHL13. Part of the BCR(KLHL41) complex containing KLHL41. Component of the BCR(KLHL12) E3 ubiquitin ligase complex, at least composed of CUL3 and KLHL12 and RBX1. Component of the BCR(KLHL3) E3 ubiquitin ligase complex, at least composed of CUL3 and KLHL3 and RBX1. Part of the BCR(ENC1) complex containing ENC1. Part of a complex consisting of BMI1/PCGF4, CUL3 and SPOP. Part of a complex consisting of BRMS1, CUL3 and SPOP. Component of the BCR(KLHL21) E3 ubiquitin ligase complex, at least composed of CUL3, KLHL21 and RBX1. Component of the BCR(KLHL22) E3 ubiquitin ligase complex, at least composed of CUL3, KLHL22 and RBX1. Component of the BCR(KLHL25) E3 ubiquitin ligase complex, at least composed of CUL3, KLHL25 and RBX1. Part of a complex consisting of MACROH2A1, CUL3 and SPOP. Component of the BCR(KLHL42) E3 ubiquitin ligase complex, at least composed of CUL3 and KLHL42. Component of the BCR(KBTBD8) E3 ubiquitin ligase complex, at least composed of CUL3, KBTBD8 and RBX1. Interacts with KLHL42 (via the BTB domain). Interacts with KATNA1; the interaction is enhanced by KLHL42. Interacts with KCTD5, KLHL9, KLHL11, KLHL13, GAN, ZBTB16, KLHL3, KLHL15, KLHL20, KLHL36, GMCL2, BTBD1. Part of a complex that contains CUL3, RBX1 and GAN. Interacts (via BTB domain) with KLHL17; the interaction regulates surface GRIK2 expression. Interacts with KCTD7. Part of the BCR(GAN) complex containing GAN. Part of the BCR(KEAP1) complex containing KEAP1. Interacts with KAT5 and ATF2. Interacts with KCTD17 in the BCR(KCTD17) E3 ubiquitin ligase complex, at least composed of CUL3, KCTD17 and RBX1. Interacts (when neddylated) with ARIH1; leading to activate the E3 ligase activity of ARIH1. Interacts with COPS9. Interacts with PPP2R5B; this interaction is indirect and mediated through KLHL15-binding and leads to PPP2R5B proteasomal degradation. Interacts with RBBP8/CtIP; this interaction is indirect and mediated through KLHL15-binding and leads to RBBP8 proteasomal degradation. Interacts with KLHL24 in the BCR(KLHL24) E3 ubiquitin ligase complex, composed of CUL3, RBX1 and KLHL24. Interacts with RHOBTB2. Interacts with CYCE. Interacts with KLHL10. Interacts with AURKA and KLHL18 (via BTB domain). Interacts (unneddylated form) with DCUN1D1, DCUN1D2, DCUN1D3, DCUN1D4 and DCUN1D5; these interactions promote the cullin neddylation. Component of a BCR3 (BTB-CUL3-RBX1) E3 ubiquitin ligase complex, also named Cul3-RING ubiquitin ligase complex CUL3(KBTBD6/7), composed of CUL3, RBX1, KBTBD6 and KBTBD7. Component of the BCR(KBTBD2) E3 ubiquitin ligase complex, at least composed of CUL3, KBTBD2 and RBX1. Interacts with KBTBD2 (via the BTB domain). Component of the BCR(KBTBD4) E3 ubiquitin ligase complex, at least composed of CUL3, KBTBD4 and RBX1. Post-translationally, neddylated. Attachment of NEDD8 is required for the E3 ubiquitin-protein ligase activity of the BCR complex. Deneddylated via its interaction with the COP9 signalosome (CSN) complex. In terms of tissue distribution, widely expressed, with highest expression in brain, spleen and testis. In the testis, it is mainly expressed in spermatids.

Its subcellular location is the nucleus. It is found in the golgi apparatus. The protein localises to the cell projection. The protein resides in the cilium. It localises to the flagellum. Its subcellular location is the cytoplasm. It is found in the cytoskeleton. The protein localises to the spindle. The protein resides in the microtubule organizing center. It localises to the centrosome. Its subcellular location is the spindle pole. It functions in the pathway protein modification; protein ubiquitination. Functionally, core component of multiple cullin-RING-based BCR (BTB-CUL3-RBX1) E3 ubiquitin-protein ligase complexes which mediate the ubiquitination and subsequent proteasomal degradation of target proteins. BCR complexes and ARIH1 collaborate in tandem to mediate ubiquitination of target proteins. As a scaffold protein may contribute to catalysis through positioning of the substrate and the ubiquitin-conjugating enzyme. The E3 ubiquitin-protein ligase activity of the complex is dependent on the neddylation of the cullin subunit and is inhibited by the association of the deneddylated cullin subunit with TIP120A/CAND1. The functional specificity of the BCR complex depends on the BTB domain-containing protein as the substrate recognition component. BCR(KLHL42) is involved in ubiquitination of KATNA1. BCR(SPOP) is involved in ubiquitination of BMI1/PCGF4, BRMS1, MACROH2A1 and DAXX, GLI2 and GLI3. Can also form a cullin-RING-based BCR (BTB-CUL3-RBX1) E3 ubiquitin-protein ligase complex containing homodimeric SPOPL or the heterodimer formed by SPOP and SPOPL; these complexes have lower ubiquitin ligase activity. BCR(KLHL9-KLHL13) controls the dynamic behavior of AURKB on mitotic chromosomes and thereby coordinates faithful mitotic progression and completion of cytokinesis. BCR(KLHL12) is involved in ER-Golgi transport by regulating the size of COPII coats, thereby playing a key role in collagen export, which is required for embryonic stem (ES) cells division: BCR(KLHL12) acts by mediating monoubiquitination of SEC31 (SEC31A or SEC31B). BCR(KLHL3) acts as a regulator of ion transport in the distal nephron; by mediating ubiquitination of WNK4. The BCR(KLHL20) E3 ubiquitin ligase complex is involved in interferon response and anterograde Golgi to endosome transport: it mediates both ubiquitination leading to degradation and 'Lys-33'-linked ubiquitination. The BCR(KLHL21) E3 ubiquitin ligase complex regulates localization of the chromosomal passenger complex (CPC) from chromosomes to the spindle midzone in anaphase and mediates the ubiquitination of AURKB. The BCR(KLHL22) ubiquitin ligase complex mediates monoubiquitination of PLK1, leading to PLK1 dissociation from phosphoreceptor proteins and subsequent removal from kinetochores, allowing silencing of the spindle assembly checkpoint (SAC) and chromosome segregation. The BCR(KLHL22) ubiquitin ligase complex is also responsible for the amino acid-stimulated 'Lys-48' polyubiquitination and proteasomal degradation of DEPDC5. Through the degradation of DEPDC5, releases the GATOR1 complex-mediated inhibition of the TORC1 pathway. The BCR(KLHL25) ubiquitin ligase complex is involved in translational homeostasis by mediating ubiquitination and subsequent degradation of hypophosphorylated EIF4EBP1 (4E-BP1). The BCR(KLHL25) ubiquitin ligase complex is also involved in lipid synthesis by mediating ubiquitination and degradation of ACLY. The BCR(KBTBD8) complex acts by mediating monoubiquitination of NOLC1 and TCOF1, leading to remodel the translational program of differentiating cells in favor of neural crest specification. Involved in ubiquitination of cyclin E and of cyclin D1 (in vitro) thus involved in regulation of G1/S transition. Involved in the ubiquitination of KEAP1, ENC1 and KLHL41. In concert with ATF2 and RBX1, promotes degradation of KAT5 thereby attenuating its ability to acetylate and activate ATM. The BCR(KCTD17) E3 ubiquitin ligase complex mediates ubiquitination and degradation of TCHP, a down-regulator of cilium assembly, thereby inducing ciliogenesis. The BCR(KLHL24) E3 ubiquitin ligase complex mediates ubiquitination of KRT14, controls KRT14 levels during keratinocytes differentiation, and is essential for skin integrity. The BCR(KLHL18) E3 ubiquitin ligase complex mediates the ubiquitination of AURKA leading to its activation at the centrosome which is required for initiating mitotic entry. The BCR(KEAP1) E3 ubiquitin ligase complex acts as a key sensor of oxidative and electrophilic stress by mediating ubiquitination and degradation of NFE2L2/NRF2, a transcription factor regulating expression of many cytoprotective genes. As part of the CUL3(KBTBD6/7) E3 ubiquitin ligase complex functions mediates 'Lys-48' ubiquitination and proteasomal degradation of TIAM1. By controlling the ubiquitination of that RAC1 guanine exchange factors (GEF), regulates RAC1 signal transduction and downstream biological processes including the organization of the cytoskeleton, cell migration and cell proliferation. The BCR(KBTBD4) E3 ubiquitin ligase complex targets CoREST corepressor complex components RCOR1, KDM1A/LSD1 and HDAC2 for proteasomal degradation with RCOR1 likely to be the primary target while degradation of KDM1A and HDAC2 is likely due to their association with RCOR1. It also targets RCOR3, MIER2 and MIER3 for proteasomal degradation as well as associated proteins ZNF217 and RREB1 with degradation being dependent on the presence of an ELM2 domain in the target proteins. The BCR(ARMC5) complex mediates premature transcription termination of transcripts that are unfavorably configured for transcriptional elongation by mediating ubiquitination of Pol II subunit POLR2A. Required for 'Lys-63'-linked ubiquitination of large ribosomal subunit protein MRPL12. This is Cullin-3 (Cul3) from Mus musculus (Mouse).